The primary structure comprises 513 residues: ATP synthase subunit alpha (513 aa).

169-176 is an ATP binding site; the sequence is GDRQTGKT.

This sequence belongs to the ATPase alpha/beta chains family. In terms of assembly, F-type ATPases have 2 components, CF(1) - the catalytic core - and CF(0) - the membrane proton channel. CF(1) has five subunits: alpha(3), beta(3), gamma(1), delta(1), epsilon(1). CF(0) has three main subunits: a(1), b(2) and c(9-12). The alpha and beta chains form an alternating ring which encloses part of the gamma chain. CF(1) is attached to CF(0) by a central stalk formed by the gamma and epsilon chains, while a peripheral stalk is formed by the delta and b chains.

It localises to the cell inner membrane. It carries out the reaction ATP + H2O + 4 H(+)(in) = ADP + phosphate + 5 H(+)(out). Produces ATP from ADP in the presence of a proton gradient across the membrane. The alpha chain is a regulatory subunit. The polypeptide is ATP synthase subunit alpha (Ralstonia pickettii (strain 12J)).